Here is a 427-residue protein sequence, read N- to C-terminus: Adenylosuccinate synthetase (427 aa).

GTP-binding positions include 12–18 and 40–42; these read GDEGKGK and GHT. Asp13 (proton acceptor) is an active-site residue. Asp13 and Gly40 together coordinate Mg(2+). IMP-binding positions include 13–16, 38–41, Thr128, Arg142, Gln223, Thr238, and Arg302; these read DEGK and NAGH. His41 functions as the Proton donor in the catalytic mechanism. 298-304 is a substrate binding site; the sequence is TTTGRAR. GTP contacts are provided by residues Arg304, 330–332, and 412–414; these read KLD and AVG.

Belongs to the adenylosuccinate synthetase family. Homodimer. Mg(2+) serves as cofactor.

It localises to the cytoplasm. It catalyses the reaction IMP + L-aspartate + GTP = N(6)-(1,2-dicarboxyethyl)-AMP + GDP + phosphate + 2 H(+). It functions in the pathway purine metabolism; AMP biosynthesis via de novo pathway; AMP from IMP: step 1/2. Functionally, plays an important role in the de novo pathway of purine nucleotide biosynthesis. Catalyzes the first committed step in the biosynthesis of AMP from IMP. This is Adenylosuccinate synthetase from Desulfitobacterium hafniense (strain DSM 10664 / DCB-2).